Here is a 288-residue protein sequence, read N- to C-terminus: Short chain aldehyde dehydrogenase 1 (288 aa).

Residues 26–28, aspartate 47, 72–73, and 99–101 each bind NAD(+); these read SGI, DV, and NAG. Residue serine 153 is the Proton donor of the active site. Positions 153 and 166 each coordinate substrate. Tyrosine 166, lysine 170, and threonine 201 together coordinate NAD(+). The active-site Proton acceptor is the tyrosine 166. Residue lysine 170 is the Proton donor/acceptor of the active site.

Belongs to the short-chain dehydrogenases/reductases (SDR) family. Homodimer. Expressed in mature seeds.

The catalysed reaction is 4,5,8-trihydroxycasbene + 2 NAD(+) = jolkinol C + 2 NADH + 2 H(+). The enzyme catalyses a secondary alcohol + NAD(+) = a ketone + NADH + H(+). It catalyses the reaction a primary alcohol + NAD(+) = an aldehyde + NADH + H(+). The protein operates within secondary metabolite biosynthesis; terpenoid biosynthesis. Functionally, involved in the biosynthesis of macrocyclic lathyrane type diterpenoids (also called Euphorbia factors) natural products, including the cyclization route from casbene to jolkinol C, a precursor for ingenol mebutate that is used to treat actinic keratosis, a precancerous skin condition. Catalyzes the conversion of 4,5,8-trihydroxycasbene into jolkinol C in presence of NAD. Also mediates the formation of casbene dione derivative and 4-ketocasbene from 4-hydroxy-8-ketocasbene and 4-hydroxycasbene, respectively. Together with CYP71D445, triggers the biosynthesis of 8-ketocasbene from 8-hydroxycasbene. The chain is Short chain aldehyde dehydrogenase 1 from Euphorbia lathyris (Caper spurge).